A 394-amino-acid chain; its full sequence is Elongation factor Tu 1 (394 aa).

The tr-type G domain maps to 10–204 (KPHVNVGTIG…ALDSYIPEPQ (195 aa)). Positions 19 to 26 (GHVDHGKT) are G1. Residue 19 to 26 (GHVDHGKT) coordinates GTP. Thr26 provides a ligand contact to Mg(2+). Positions 60–64 (GITIS) are G2. The G3 stretch occupies residues 81 to 84 (DCPG). Residues 81–85 (DCPGH) and 136–139 (NKCD) contribute to the GTP site. A G4 region spans residues 136–139 (NKCD). Residues 174–176 (SAL) form a G5 region.

The protein belongs to the TRAFAC class translation factor GTPase superfamily. Classic translation factor GTPase family. EF-Tu/EF-1A subfamily. In terms of assembly, monomer.

It is found in the cytoplasm. The enzyme catalyses GTP + H2O = GDP + phosphate + H(+). Functionally, GTP hydrolase that promotes the GTP-dependent binding of aminoacyl-tRNA to the A-site of ribosomes during protein biosynthesis. The sequence is that of Elongation factor Tu 1 from Pseudoalteromonas translucida (strain TAC 125).